We begin with the raw amino-acid sequence, 559 residues long: YTH domain-containing family protein 1 (559 aa).

The disordered stretch occupies residues 1 to 49 (MSATSVDPQRTKGQDNKVQNGSLHQKDAVHDNDFEPYLSGQSNPSNSYP). Serine 2 carries the N-acetylserine modification. Positions 24–33 (HQKDAVHDND) are enriched in basic and acidic residues. Serine 182 bears the Phosphoserine mark. Residues 239–365 (SKPAKPQPKM…PTSAPSVESH (127 aa)) form a disordered region. Composition is skewed to low complexity over residues 279–305 (PAPKASAPQQTPSPQAAPQPQQVAQPL) and 314–326 (QPQYQSPQQPLQP). Residues 343-361 (GANSDSNSVGNAQPTSAPS) are compositionally biased toward polar residues. The 135-residue stretch at 389-523 (GRVFIIKSYS…EKAKQVLKII (135 aa)) folds into the YTH domain. Residues 395–397 (KSY), aspartate 401, 411–412 (WC), asparagine 441, tryptophan 465, and tryptophan 470 each bind RNA.

This sequence belongs to the YTHDF family. YTHDF1 subfamily. As to quaternary structure, interacts with CNOT1; promoting recruitment of the CCR4-NOT complex. Interacts with ribosomes. Interacts with eIF3 (EIF3A or EIF3B). Interacts with YTHDF3. Ubiquitinated by the CUL7-FBXW8 E3 ligase complex leading to degradation. Deubiquitinated and stabilized by USP5 by removing 'Lys-11'-linked polyubiquitination. In terms of tissue distribution, in brain, preferentially expressed in the hippocampus.

The protein localises to the cytoplasm. The protein resides in the P-body. Its subcellular location is the stress granule. Functionally, specifically recognizes and binds N6-methyladenosine (m6A)-containing mRNAs, and regulates their stability. M6A is a modification present at internal sites of mRNAs and some non-coding RNAs and plays a role in mRNA stability and processing. Acts as a regulator of mRNA stability by promoting degradation of m6A-containing mRNAs via interaction with the CCR4-NOT complex. The YTHDF paralogs (YTHDF1, YTHDF2 and YTHDF3) share m6A-containing mRNAs targets and act redundantly to mediate mRNA degradation and cellular differentiation. Required to facilitate learning and memory formation in the hippocampus by binding to m6A-containing neuronal mRNAs. Acts as a regulator of axon guidance by binding to m6A-containing ROBO3 transcripts. Acts as a negative regulator of antigen cross-presentation in myeloid dendritic cells. In the context of tumorigenesis, negative regulation of antigen cross-presentation limits the anti-tumor response by reducing efficiency of tumor-antigen cross-presentation. Promotes formation of phase-separated membraneless compartments, such as P-bodies or stress granules, by undergoing liquid-liquid phase separation upon binding to mRNAs containing multiple m6A-modified residues: polymethylated mRNAs act as a multivalent scaffold for the binding of YTHDF proteins, juxtaposing their disordered regions and thereby leading to phase separation. The resulting mRNA-YTHDF complexes then partition into different endogenous phase-separated membraneless compartments, such as P-bodies, stress granules or neuronal RNA granules. In Mus musculus (Mouse), this protein is YTH domain-containing family protein 1.